The chain runs to 234 residues: Orofacial cleft 1 candidate gene 1 protein homolog (234 aa).

Disordered regions lie at residues 1-21 (MEKE…KSKS) and 201-234 (SKHH…WQQR). Residues 202–213 (KHHKEASHHNKK) are compositionally biased toward basic residues. Over residues 223 to 234 (FKDREASRWQQR) the composition is skewed to basic and acidic residues.

The sequence is that of Orofacial cleft 1 candidate gene 1 protein homolog (OFCC1) from Gallus gallus (Chicken).